The primary structure comprises 507 residues: MQGATTLDAASPGPLALLGLLFAATLLLSALFLLTRRTRRPREPPLIKGWLPYLGMALKFFKDPLTFLKTLQRQHGDTFTVFLVGKYITFVLNPFQYQYVTKNPKQLSFQKFSSRLSAKAFSVKKLLTDDDLNEDVHRAYLLLQGKPLDALLETMIQEVKELFESQLLKITDWNTERIFAFCGSLVFEITFATLYGKILAGNKKQIISELRDDFFKFDDMFPYLVSDIPIQLLRNEESMQKKIIKCLTSEKVAQMQGQSKIVQERQDLLKRYYRHDDPEIGAHHLGFLWASLANTIPAMFWAMYYILRHPEAMEALRDEIDSFLQSTGQKKGPGISVHFTREQLDSLVCLESTILEVLRLCSYSSIIREVQEDMNLSLESKSFSLRKGDFVALFPPLIHNDPEIFDAPKEFRFDRFIEDGKKKSTFFKGGKKLKTYVMPFGLGTSKCPGRYFAVNEMKLLLIMLLTYFDLEIIDRKPIGLNHSRMFLGIQHPDSAVSFRYKAKSWRS.

Transmembrane regions (helical) follow at residues 14–34, 178–198, and 287–307; these read PLALLGLLFAATLLLSALFLL, IFAFCGSLVFEITFATLYGKI, and FLWASLANTIPAMFWAMYYIL. C447 serves as a coordination point for heme.

The protein belongs to the cytochrome P450 family. It depends on heme as a cofactor. Highly expressed in brain structures including the corpus callosum, the anterior commissure and fornix. The hippocampal expression is particularly prominent in the dentate gyrus. Expressed in liver and kidney. The hepatic expression is sexually dimorphic, predominantly detected in male liver while barely detectable in females. Expressed in lymph nodes and spleens, in both lymphoid and stromal compartments. Higher expression is detected in fibroblastic reticular cells, a type of stromal cells in the lymph nodes. Also expressed at high levels in the outer follicle and at the B cell-T cell boundary of splenic germinal centers. Expressed in dendritic cells (DCs) subpopulations being most abundant in CD8-positive DCs.

It is found in the endoplasmic reticulum membrane. Its subcellular location is the microsome membrane. It catalyses the reaction 25-hydroxycholesterol + reduced [NADPH--hemoprotein reductase] + O2 = 7alpha,25-dihydroxycholesterol + oxidized [NADPH--hemoprotein reductase] + H2O + H(+). The enzyme catalyses (25R)-cholest-5-ene-3beta,26-diol + reduced [NADPH--hemoprotein reductase] + O2 = (25R)-cholest-5-en-3beta,7alpha,26-triol + oxidized [NADPH--hemoprotein reductase] + H2O + H(+). The catalysed reaction is (24S)-hydroxycholesterol + reduced [NADPH--hemoprotein reductase] + O2 = (24S)-7alpha-dihydroxycholesterol + oxidized [NADPH--hemoprotein reductase] + H2O + H(+). It carries out the reaction (24S)-25-epoxycholesterol + reduced [NADPH--hemoprotein reductase] + O2 = (24S,25)-epoxy-7alpha-hydroxycholesterol + oxidized [NADPH--hemoprotein reductase] + H2O + H(+). It catalyses the reaction (22R)-hydroxycholesterol + reduced [NADPH--hemoprotein reductase] + O2 = (22R,7alpha)-dihydroxycholesterol + oxidized [NADPH--hemoprotein reductase] + H2O + H(+). The enzyme catalyses androst-5-en-3beta,17beta-diol + reduced [NADPH--hemoprotein reductase] + O2 = androst-5-en-3beta,7alpha,17beta-triol + oxidized [NADPH--hemoprotein reductase] + H2O + H(+). The catalysed reaction is 5alpha-androstane-3beta,17beta-diol + reduced [NADPH--hemoprotein reductase] + O2 = 5alpha-androstane-3beta,6alpha,17beta-triol + oxidized [NADPH--hemoprotein reductase] + H2O + H(+). It carries out the reaction 3beta-hydroxyandrost-5-en-17-one + reduced [NADPH--hemoprotein reductase] + O2 = 3beta,7alpha-dihydroxyandrost-5-en-17-one + oxidized [NADPH--hemoprotein reductase] + H2O + H(+). It catalyses the reaction 3beta-hydroxy-5alpha-androstan-17-one + reduced [NADPH--hemoprotein reductase] + O2 = 3beta,7alpha-dihydroxy-5alpha-androstan-17-one + oxidized [NADPH--hemoprotein reductase] + H2O + H(+). The enzyme catalyses pregnenolone + reduced [NADPH--hemoprotein reductase] + O2 = 7alpha-hydroxypregnenolone + oxidized [NADPH--hemoprotein reductase] + H2O + H(+). It functions in the pathway lipid metabolism; bile acid biosynthesis. It participates in steroid hormone biosynthesis. Inhibited by drugs voriconazole and metyrapone. Functionally, a cytochrome P450 monooxygenase involved in the metabolism of endogenous oxysterols and steroid hormones, including neurosteroids. Mechanistically, uses molecular oxygen inserting one oxygen atom into a substrate, and reducing the second into a water molecule, with two electrons provided by NADPH via cytochrome P450 reductase (CPR; NADPH-ferrihemoprotein reductase). Catalyzes the hydroxylation of carbon hydrogen bonds of steroids with a preference for 7-alpha position. Usually metabolizes steroids carrying a hydroxy group at position 3, functioning as a 3-hydroxy steroid 7-alpha hydroxylase. Hydroxylates oxysterols, including 25-hydroxycholesterol and (25R)-cholest-5-ene-3beta,26-diol toward 7-alpha hydroxy derivatives, which may be transported to the liver and converted to bile acids. Via its product 7-alpha,25-dihydroxycholesterol, a ligand for the chemotactic G protein-coupled receptor GPR183/EBI2, regulates B cell migration in germinal centers of lymphoid organs, thus guiding efficient maturation of plasma B cells and overall antigen-specific humoral immune response. 7-alpha hydroxylates neurosteroids, including 3beta-hydroxyandrost-5-en-17-one (dehydroepiandrosterone) and pregnenolone, both involved in hippocampus-associated memory and learning. Metabolizes androstanoids toward 6- or 7-alpha hydroxy derivatives. The chain is Cytochrome P450 7B1 from Mus musculus (Mouse).